The sequence spans 203 residues: Holliday junction branch migration complex subunit RuvA (203 aa).

Residues 1 to 65 (MIAYIHGKLL…EDAFDLYGFP (65 aa)) are domain I. The segment at 66 to 144 (CFDDREVFRT…TLKSATVRSG (79 aa)) is domain II. Positions 145–155 (ACPVEGDRSEF) are flexible linker. Residues 155 to 203 (FLDALSGLRNLGYGDDEVRDFLKDIFDEEPDLDAGGAIRVALKKISQNK) are domain III.

It belongs to the RuvA family. In terms of assembly, homotetramer. Forms an RuvA(8)-RuvB(12)-Holliday junction (HJ) complex. HJ DNA is sandwiched between 2 RuvA tetramers; dsDNA enters through RuvA and exits via RuvB. An RuvB hexamer assembles on each DNA strand where it exits the tetramer. Each RuvB hexamer is contacted by two RuvA subunits (via domain III) on 2 adjacent RuvB subunits; this complex drives branch migration. In the full resolvosome a probable DNA-RuvA(4)-RuvB(12)-RuvC(2) complex forms which resolves the HJ.

It localises to the cytoplasm. In terms of biological role, the RuvA-RuvB-RuvC complex processes Holliday junction (HJ) DNA during genetic recombination and DNA repair, while the RuvA-RuvB complex plays an important role in the rescue of blocked DNA replication forks via replication fork reversal (RFR). RuvA specifically binds to HJ cruciform DNA, conferring on it an open structure. The RuvB hexamer acts as an ATP-dependent pump, pulling dsDNA into and through the RuvAB complex. HJ branch migration allows RuvC to scan DNA until it finds its consensus sequence, where it cleaves and resolves the cruciform DNA. This chain is Holliday junction branch migration complex subunit RuvA, found in Maridesulfovibrio salexigens (strain ATCC 14822 / DSM 2638 / NCIMB 8403 / VKM B-1763) (Desulfovibrio salexigens).